Reading from the N-terminus, the 122-residue chain is Large ribosomal subunit protein uL14 (122 aa).

Belongs to the universal ribosomal protein uL14 family. Part of the 50S ribosomal subunit. Forms a cluster with proteins L3 and L19. In the 70S ribosome, L14 and L19 interact and together make contacts with the 16S rRNA in bridges B5 and B8.

In terms of biological role, binds to 23S rRNA. Forms part of two intersubunit bridges in the 70S ribosome. The protein is Large ribosomal subunit protein uL14 of Bacillus cytotoxicus (strain DSM 22905 / CIP 110041 / 391-98 / NVH 391-98).